The sequence spans 342 residues: Mitochondrial sorting homolog (342 aa).

Residues 1–6 (MTDRNE) lie on the Mitochondrial intermembrane side of the membrane. The helical transmembrane segment at 7 to 25 (LIGVAIRVVAAAAVSFLSV) threads the bilayer. Over 26–342 (RYLVKYLDPN…AHLLVEETLD (317 aa)) the chain is Cytoplasmic. 124–131 (GPPGCGKT) lines the ATP pocket.

It belongs to the AAA ATPase family.

It is found in the mitochondrion outer membrane. In terms of biological role, involved in intramitochondrial sorting of proteins. This Caenorhabditis elegans protein is Mitochondrial sorting homolog (mspn-1).